The primary structure comprises 553 residues: Chaperonin GroEL 1 (553 aa).

ATP contacts are provided by residues 29–32 (TIGP), 86–90 (DGTTT), Gly413, 476–478 (NAL), and Asp492. Residues 520–543 (DKPEPPAPAGGGGDPMGGMGGMDP) form a disordered region. The segment covering 528 to 543 (AGGGGDPMGGMGGMDP) has biased composition (gly residues).

It belongs to the chaperonin (HSP60) family. In terms of assembly, forms a cylinder of 14 subunits composed of two heptameric rings stacked back-to-back. Interacts with the co-chaperonin GroES.

The protein resides in the cytoplasm. It carries out the reaction ATP + H2O + a folded polypeptide = ADP + phosphate + an unfolded polypeptide.. Together with its co-chaperonin GroES, plays an essential role in assisting protein folding. The GroEL-GroES system forms a nano-cage that allows encapsulation of the non-native substrate proteins and provides a physical environment optimized to promote and accelerate protein folding. The polypeptide is Chaperonin GroEL 1 (Synechococcus sp. (strain CC9311)).